Here is a 540-residue protein sequence, read N- to C-terminus: Light-independent protochlorophyllide reductase subunit B (540 aa).

Aspartate 36 is a [4Fe-4S] cluster binding site. The active-site Proton donor is the aspartate 292. 428 to 429 is a binding site for substrate; the sequence is GL. The interval 451-490 is disordered; that stretch reads SNVASGVEPSTPSVSSEVSASSSASPEASAPTPSPDGDMV. The segment covering 457–481 has biased composition (low complexity); the sequence is VEPSTPSVSSEVSASSSASPEASAP.

This sequence belongs to the ChlB/BchB/BchZ family. As to quaternary structure, protochlorophyllide reductase is composed of three subunits; BchL, BchN and BchB. Forms a heterotetramer of two BchB and two BchN subunits. [4Fe-4S] cluster serves as cofactor.

It carries out the reaction chlorophyllide a + oxidized 2[4Fe-4S]-[ferredoxin] + 2 ADP + 2 phosphate = protochlorophyllide a + reduced 2[4Fe-4S]-[ferredoxin] + 2 ATP + 2 H2O. It participates in porphyrin-containing compound metabolism; bacteriochlorophyll biosynthesis (light-independent). Its function is as follows. Component of the dark-operative protochlorophyllide reductase (DPOR) that uses Mg-ATP and reduced ferredoxin to reduce ring D of protochlorophyllide (Pchlide) to form chlorophyllide a (Chlide). This reaction is light-independent. The NB-protein (BchN-BchB) is the catalytic component of the complex. In Chlorobium chlorochromatii (strain CaD3), this protein is Light-independent protochlorophyllide reductase subunit B.